Here is a 161-residue protein sequence, read N- to C-terminus: Allophycocyanin beta chain (161 aa).

Asn-71 is modified (N4-methylasparagine). Cys-81 contributes to the (2R,3E)-phycocyanobilin binding site.

Belongs to the phycobiliprotein family. As to quaternary structure, heterodimer of an alpha and a beta chain. In terms of processing, contains one covalently linked phycocyanobilin chromophore.

The protein resides in the plastid. It localises to the chloroplast thylakoid membrane. Functionally, light-harvesting photosynthetic bile pigment-protein from the phycobiliprotein complex. Allophycocyanin has a maximum absorption at approximately 650 nanometers. The chain is Allophycocyanin beta chain (apcB) from Aglaothamnion neglectum (Red alga).